The chain runs to 929 residues: MGLCLAQLAVTCLFLVPFVLSQVTEFVSIDCGCSSNYTDPRTGLGWVSDSEIIKQGKPVTLANTNWNSMQYRRRRDFPTDNKKYCYRLSTKERRRYIVRTTFLYGGLGSEEAYPKFQLYLDATKWATVTIQEVSRVYVEELIVRATSSYVDVCVCCAITGSPFMSTLELRPLNLSMYATDYEDNFFLKVAARVNFGAPNMDALRYPDDPYDRIWESDINKRPNYLVGVAPGTTRINTSKTINTLTREYPPMKVMQTAVVGTQGLISYRLNLEDFPANARAYAYFAEIEELGANETRKFKLVQPYFPDYSNAVVNIAENANGSYTLYEPSYMNVTLDFVLTFSFGKTKDSTQGPLLNAIEISKYLPISVKTDRSDVSVLDAIRSMSPDSDWASEGGDPCIPVLWSWVNCSSTSPPRVTKIALSRKNLRGEIPPGINYMEALTELWLDDNELTGTLPDMSKLVNLKIMHLENNQLSGSLPPYLAHLPNLQELSIENNSFKGKIPSALLKGKVLFKYNNNPELQNEAQRKHFWQILGISIAAVAILLLLVGGSLVLLCALRKTKRADKGDSTETKKKGLVAYSAVRGGHLLDEGVAYFISLPVLEEATDNFSKKVGRGSFGSVYYGRMKDGKEVAVKITADPSSHLNRQFVTEVALLSRIHHRNLVPLIGYCEEADRRILVYEYMHNGSLGDHLHGSSDYKPLDWLTRLQIAQDAAKGLEYLHTGCNPSIIHRDVKSSNILLDINMRAKVSDFGLSRQTEEDLTHVSSVAKGTVGYLDPEYYASQQLTEKSDVYSFGVVLFELLSGKKPVSAEDFGPELNIVHWARSLIRKGDVCGIIDPCIASNVKIESVWRVAEVANQCVEQRGHNRPRMQEVIVAIQDAIRIERGNENGLKSSSSSSSKAQSSRKTLLTSFLELESPDISRNSLAPAAR.

The N-terminal stretch at 1–21 (MGLCLAQLAVTCLFLVPFVLS) is a signal peptide. Topologically, residues 22–531 (QVTEFVSIDC…NEAQRKHFWQ (510 aa)) are extracellular. N-linked (GlcNAc...) asparagine glycans are attached at residues N36, N173, N236, N293, N320, N332, and N407. LRR repeat units follow at residues 413-437 (PPRVTKIALSRKNLRGEIPPGINYM), 438-460 (EALTELWLDDNELTGTLPDMSKL), 461-484 (VNLKIMHLENNQLSGSLPPYLAHL), and 485-508 (PNLQELSIENNSFKGKIPSALLKG). N494 carries N-linked (GlcNAc...) asparagine glycosylation. The helical transmembrane segment at 532–552 (ILGISIAAVAILLLLVGGSLV) threads the bilayer. Topologically, residues 553–929 (LLCALRKTKR…SRNSLAPAAR (377 aa)) are cytoplasmic. One can recognise a Protein kinase domain in the interval 606-880 (DNFSKKVGRG…EVIVAIQDAI (275 aa)). Residues 612-620 (VGRGSFGSV) and K634 contribute to the ATP site. At Y679 the chain carries Phosphotyrosine. D731 (proton acceptor) is an active-site residue. S735 and S764 each carry phosphoserine. At T770 the chain carries Phosphothreonine. A Phosphotyrosine modification is found at Y778.

The protein belongs to the protein kinase superfamily. Ser/Thr protein kinase family.

Its subcellular location is the membrane. It catalyses the reaction L-seryl-[protein] + ATP = O-phospho-L-seryl-[protein] + ADP + H(+). The catalysed reaction is L-threonyl-[protein] + ATP = O-phospho-L-threonyl-[protein] + ADP + H(+). The sequence is that of Probable LRR receptor-like serine/threonine-protein kinase At1g67720 from Arabidopsis thaliana (Mouse-ear cress).